The following is a 223-amino-acid chain: Ribonuclease 3 (223 aa).

The region spanning 3-125 (LERLQKKLGY…IIAAIYLDAG (123 aa)) is the RNase III domain. Glu-38 is a binding site for Mg(2+). Asp-42 is an active-site residue. 2 residues coordinate Mg(2+): Asp-111 and Glu-114. Glu-114 is a catalytic residue. The DRBM domain occupies 152–222 (DPKTRLQEFL…AEQVLAKLTT (71 aa)).

Belongs to the ribonuclease III family. As to quaternary structure, homodimer. The cofactor is Mg(2+).

The protein localises to the cytoplasm. It catalyses the reaction Endonucleolytic cleavage to 5'-phosphomonoester.. In terms of biological role, digests double-stranded RNA. Involved in the processing of primary rRNA transcript to yield the immediate precursors to the large and small rRNAs (23S and 16S). Processes some mRNAs, and tRNAs when they are encoded in the rRNA operon. Processes pre-crRNA and tracrRNA of type II CRISPR loci if present in the organism. This chain is Ribonuclease 3, found in Actinobacillus pleuropneumoniae serotype 3 (strain JL03).